Consider the following 32-residue polypeptide: DNA-binding protein HU (32 aa).

This sequence belongs to the bacterial histone-like protein family.

Functionally, histone-like DNA-binding protein which is capable of wrapping DNA to stabilize it, and thus to prevent its denaturation under extreme environmental conditions. This Synechocystis sp. (strain PCC 6701) protein is DNA-binding protein HU (hup).